The primary structure comprises 736 residues: DNA topoisomerase 4 subunit A (736 aa).

Residues L32–Q496 form the Topo IIA-type catalytic domain. Catalysis depends on Y120, which acts as the O-(5'-phospho-DNA)-tyrosine intermediate.

This sequence belongs to the type II topoisomerase GyrA/ParC subunit family. ParC type 1 subfamily. Heterotetramer composed of ParC and ParE.

It localises to the cell membrane. The catalysed reaction is ATP-dependent breakage, passage and rejoining of double-stranded DNA.. Its function is as follows. Topoisomerase IV is essential for chromosome segregation. It relaxes supercoiled DNA. Performs the decatenation events required during the replication of a circular DNA molecule. This Rickettsia bellii (strain RML369-C) protein is DNA topoisomerase 4 subunit A.